The primary structure comprises 448 residues: Ribosomal protein uS12 methylthiotransferase RimO (448 aa).

An MTTase N-terminal domain is found at 10 to 120 (PNIGFVSLGC…VMEHVHKYVP (111 aa)). Residues Cys19, Cys55, Cys84, Cys152, Cys156, and Cys159 each coordinate [4Fe-4S] cluster. In terms of domain architecture, Radical SAM core spans 138–379 (LTPKHYAYLK…MELQQQISAQ (242 aa)). In terms of domain architecture, TRAM spans 382-448 (QQKIGKTLPV…ADEYDLWGTC (67 aa)).

The protein belongs to the methylthiotransferase family. RimO subfamily. [4Fe-4S] cluster is required as a cofactor.

It localises to the cytoplasm. It catalyses the reaction L-aspartate(89)-[ribosomal protein uS12]-hydrogen + (sulfur carrier)-SH + AH2 + 2 S-adenosyl-L-methionine = 3-methylsulfanyl-L-aspartate(89)-[ribosomal protein uS12]-hydrogen + (sulfur carrier)-H + 5'-deoxyadenosine + L-methionine + A + S-adenosyl-L-homocysteine + 2 H(+). Catalyzes the methylthiolation of an aspartic acid residue of ribosomal protein uS12. In Mannheimia succiniciproducens (strain KCTC 0769BP / MBEL55E), this protein is Ribosomal protein uS12 methylthiotransferase RimO.